The sequence spans 89 residues: Small ribosomal subunit protein uS15 (89 aa).

The tract at residues 1–25 (MSLDTTEKQQLINTHQTHGTDTGSA) is disordered. A compositionally biased stretch (polar residues) spans 8-25 (KQQLINTHQTHGTDTGSA).

Belongs to the universal ribosomal protein uS15 family. In terms of assembly, part of the 30S ribosomal subunit. Forms a bridge to the 50S subunit in the 70S ribosome, contacting the 23S rRNA.

Its function is as follows. One of the primary rRNA binding proteins, it binds directly to 16S rRNA where it helps nucleate assembly of the platform of the 30S subunit by binding and bridging several RNA helices of the 16S rRNA. Functionally, forms an intersubunit bridge (bridge B4) with the 23S rRNA of the 50S subunit in the ribosome. This chain is Small ribosomal subunit protein uS15, found in Synechococcus sp. (strain CC9605).